The chain runs to 954 residues: Bifunctional endo-1,4-beta-xylanase XylA (954 aa).

Residues 1–27 (MKLSKIKKVLSGTVSALMIASAAPVVA) constitute a signal peptide (or 28, or 29). One can recognise a GH11 domain in the interval 29 to 236 (AADQQTRGNV…SNGSANVKSV (208 aa)). The active-site Nucleophile is Glu122. Catalysis depends on Glu223, which acts as the Proton donor. Residues 233–243 (VKSVSVTQGGS) show a composition bias toward polar residues. Residues 233–628 (VKSVSVTQGG…NNNNSAGSSD (396 aa)) form a disordered region. Over residues 246 to 622 (NGGQQQNNDW…WNQGQQNNNN (377 aa)) the composition is skewed to low complexity. The region spanning 624 to 952 (AGSSDSLKGA…KPAYDRVMAL (329 aa)) is the GH10 domain. Glu774 (proton donor) is an active-site residue. Glu884 functions as the Nucleophile in the catalytic mechanism.

It in the N-terminal section; belongs to the glycosyl hydrolase 11 (cellulase G) family. This sequence in the C-terminal section; belongs to the glycosyl hydrolase 10 (cellulase F) family.

It carries out the reaction Endohydrolysis of (1-&gt;4)-beta-D-xylosidic linkages in xylans.. Its pathway is glycan degradation; xylan degradation. Xylanase domain releases more xylo-oligosaccharides and GH10 domain more xylose. This is Bifunctional endo-1,4-beta-xylanase XylA (xynA) from Ruminococcus flavefaciens.